The following is a 468-amino-acid chain: Putative BTB/POZ domain and WD-repeat protein R154 (468 aa).

In terms of domain architecture, BTB spans 14–85 (SDLQLIVEDS…FYGIDDKLPE (72 aa)). 3 WD repeats span residues 194–233 (HHSE…IIFN), 354–398 (DEIG…LVKS), and 401–440 (LFDV…IIYT).

The protein belongs to the mimivirus BTB/WD family.

This chain is Putative BTB/POZ domain and WD-repeat protein R154, found in Acanthamoeba polyphaga (Amoeba).